A 474-amino-acid polypeptide reads, in one-letter code: Ribulose bisphosphate carboxylase large chain (474 aa).

Positions 123 and 173 each coordinate substrate. The active-site Proton acceptor is K175. K177 lines the substrate pocket. K201, D203, and E204 together coordinate Mg(2+). At K201 the chain carries N6-carboxylysine. The active-site Proton acceptor is the H293. R294, H326, and S378 together coordinate substrate.

It belongs to the RuBisCO large chain family. Type I subfamily. Heterohexadecamer of 8 large chains and 8 small chains; disulfide-linked. The disulfide link is formed within the large subunit homodimers. Mg(2+) serves as cofactor. The disulfide bond which can form in the large chain dimeric partners within the hexadecamer appears to be associated with oxidative stress and protein turnover.

The protein localises to the carboxysome. It catalyses the reaction 2 (2R)-3-phosphoglycerate + 2 H(+) = D-ribulose 1,5-bisphosphate + CO2 + H2O. It carries out the reaction D-ribulose 1,5-bisphosphate + O2 = 2-phosphoglycolate + (2R)-3-phosphoglycerate + 2 H(+). RuBisCO catalyzes two reactions: the carboxylation of D-ribulose 1,5-bisphosphate, the primary event in carbon dioxide fixation, as well as the oxidative fragmentation of the pentose substrate in the photorespiration process. Both reactions occur simultaneously and in competition at the same active site. The protein is Ribulose bisphosphate carboxylase large chain of Synechococcus sp.